The primary structure comprises 142 residues: Transcriptional regulator MraZ (142 aa).

SpoVT-AbrB domains are found at residues 5–51 (ASAL…PRPE) and 77–120 (AADV…DAAT).

Belongs to the MraZ family. In terms of assembly, forms oligomers.

The protein localises to the cytoplasm. Its subcellular location is the nucleoid. This chain is Transcriptional regulator MraZ, found in Cupriavidus taiwanensis (strain DSM 17343 / BCRC 17206 / CCUG 44338 / CIP 107171 / LMG 19424 / R1) (Ralstonia taiwanensis (strain LMG 19424)).